The sequence spans 101 residues: Interleukin-8 (101 aa).

Positions 1 to 22 are cleaved as a signal peptide; it reads MPSQLRVAVLAAFLLSAVLCEG. 2 cysteine pairs are disulfide-bonded: C34–C61 and C36–C77.

Belongs to the intercrine alpha (chemokine CxC) family. Homodimer. Interacts with TNFAIP6 (via Link domain); this interaction interferes with chemokine binding to glycosaminoglycans.

It is found in the secreted. In terms of biological role, chemotactic factor that mediates inflammatory response by attracting neutrophils, basophils, and T-cells to clear pathogens and protect the host from infection. Also plays an important role in neutrophil activation. Released in response to an inflammatory stimulus, exerts its effect by binding to the G-protein-coupled receptors CXCR1 and CXCR2, primarily found in neutrophils, monocytes and endothelial cells. G-protein heterotrimer (alpha, beta, gamma subunits) constitutively binds to CXCR1/CXCR2 receptor and activation by IL8 leads to beta and gamma subunits release from Galpha (GNAI2 in neutrophils) and activation of several downstream signaling pathways including PI3K and MAPK pathways. The polypeptide is Interleukin-8 (CXCL8) (Cavia porcellus (Guinea pig)).